Reading from the N-terminus, the 100-residue chain is Urease subunit gamma (100 aa).

It belongs to the urease gamma subunit family. Heterotrimer of UreA (gamma), UreB (beta) and UreC (alpha) subunits. Three heterotrimers associate to form the active enzyme.

It localises to the cytoplasm. It catalyses the reaction urea + 2 H2O + H(+) = hydrogencarbonate + 2 NH4(+). It participates in nitrogen metabolism; urea degradation; CO(2) and NH(3) from urea (urease route): step 1/1. The sequence is that of Urease subunit gamma from Paenarthrobacter aurescens (strain TC1).